Reading from the N-terminus, the 471-residue chain is Putative multidrug resistance protein MdtD (471 aa).

Residues methionine 1 to glutamine 11 lie on the Periplasmic side of the membrane. Residues leucine 12–alanine 32 traverse the membrane as a helical segment. Over leucine 33–histidine 48 the chain is Cytoplasmic. A helical membrane pass occupies residues methionine 49–alanine 69. The Periplasmic portion of the chain corresponds to aspartate 70–asparagine 76. Residues isoleucine 77 to threonine 97 traverse the membrane as a helical segment. At leucine 98–leucine 101 the chain is on the cytoplasmic side. A helical membrane pass occupies residues leucine 102–methionine 124. The Periplasmic portion of the chain corresponds to lysine 125–threonine 137. The helical transmembrane segment at phenylalanine 138 to valine 158 threads the bilayer. The Cytoplasmic portion of the chain corresponds to glutamate 159 to histidine 164. The chain crosses the membrane as a helical span at residues tryptophan 165–methionine 185. Over proline 186–aspartate 196 the chain is Periplasmic. Residues leucine 197–serine 217 form a helical membrane-spanning segment. The Cytoplasmic segment spans residues lysine 218–proline 224. Residues leucine 225–alanine 245 form a helical membrane-spanning segment. Topologically, residues arginine 246–threonine 262 are periplasmic. The chain crosses the membrane as a helical span at residues phenylalanine 263 to methionine 283. The Cytoplasmic portion of the chain corresponds to threonine 284–proline 285. Residues valine 286–methionine 306 form a helical membrane-spanning segment. Over valine 307–threonine 341 the chain is Periplasmic. A helical transmembrane segment spans residues leucine 342–leucine 362. Over glutamine 363–serine 395 the chain is Cytoplasmic. Residues methionine 396–phenylalanine 416 form a helical membrane-spanning segment. The Periplasmic segment spans residues glycine 417 to threonine 430. Residues valine 431–alanine 451 traverse the membrane as a helical segment. The Cytoplasmic segment spans residues arginine 452–glutamine 471.

It belongs to the major facilitator superfamily. TCR/Tet family.

The protein localises to the cell inner membrane. In Escherichia coli (strain K12 / MC4100 / BW2952), this protein is Putative multidrug resistance protein MdtD.